The chain runs to 571 residues: Phosphoribosylaminoimidazole carboxylase (571 aa).

Ser-37 bears the Phosphoserine mark. The ATP-grasp domain occupies 110–298; that stretch reads KEHLIKNGIA…QFEAHLRSIL (189 aa). An ATP-binding site is contributed by 138–193; that stretch reads GRDLGFPFVLKSRTLAYDGRGNFVVKNKEMIPEALEVLKDRPLYAEKWAPFTKELA.

It in the C-terminal section; belongs to the AIR carboxylase family. Class I subfamily.

The enzyme catalyses 5-amino-1-(5-phospho-D-ribosyl)imidazole-4-carboxylate + H(+) = 5-amino-1-(5-phospho-beta-D-ribosyl)imidazole + CO2. The protein operates within purine metabolism; IMP biosynthesis via de novo pathway; 5-amino-1-(5-phospho-D-ribosyl)imidazole-4-carboxylate from 5-amino-1-(5-phospho-D-ribosyl)imidazole (carboxylase route): step 1/1. The sequence is that of Phosphoribosylaminoimidazole carboxylase (ADE2) from Saccharomyces cerevisiae (strain ATCC 204508 / S288c) (Baker's yeast).